The chain runs to 2264 residues: MTGHEFKSWILELREILREIKNSHYFLDSWTQFNSVGSFIHIFFHQERFIKLFDSRIWSILLSHNSQGSTSNRYFTIKGVILFGVAVLIYRINNRNMVERKNLYLIGLLPIPMNSIGPRNDTLEESVGSSNINRLIVSLLYLPKGKKIYESSFLNPKESTWVLPITKKCSMPESNWGSRWWRDWIGKKRDSSCKISNETVAGIEILFKEKDLKYLEFFFVYYRDDPIRKDHDWELFDRLSLRKRQNRINLNSGPLFEILVKHWICYLMSAFREKIPIEVEGFFKQQGAGSTIKSNDIEHVSHLFSRNKSAISLQNCAQFHMWQFRQDLFVSWGKNPPESDLLRNVSRENLIWLDNVWLVNKDRFFRKVRNVSSNIQYDSTRSSFVQVRDSSQLKGSSDQSRDHFDSISNEDSEYHTLINQREIQQLKERSILWDPSFLQTEGTEIESNRFPKCLSGYSSMSRLFTEREKQMINHLLPEEIEEFLGNPTRSVRSFFSDRWSEFHLGSNPTERSTRDQKLLKKQQDLSFLRRSENKEMVNLFKIITYLQNTVSIHPISSDSGCDMVPKDEPDMDSSNKISFLNKNPFFDLFHLFHDRNRGGYTLHHDFESEERFQELADLFTLSITEPDLVYHKRFAFSIDSYGLDPKQFLNGVFNSRYEWKTTSLLVLLVLLPIFYEENESFYRRIRKKRVRISCGNDLEEPKPKIVVFASNNIMEAANQYRLIRNLIQIQHSTHRYIRNVLNRFFLMNRSDRNFKYGIQRDQIGKDTLNHRTLMKYMINQHLSNLKKSQKRWFDPLIFFSRTKRSMNRDPDAYRYKWSTGSKNFQEHFVSEQKSRFQVVFDRLRINQYSIDWSEVIDKKDLSKPLRFFLSKLLLFLSNSLPFLFVSFGNIPIHRSEIYIYELKGPNDPQFLESIGLQIVHLKKLKPFLLDDHETCQKSKFLINGGTISPFLFNKIPKWMIDSFHTRNNRRKSFDNTDSYFSMIFHDQYNWLNPVKSFHRSSLRSSFYKANQLRFLNNPHHFCFYCNKRFPFYVEKARINNYDFTYGQFLNILFIRNKIFSLCVGKKKHAFWGRDTISAIESQVSNIFIPKAFPQSGDETYNLYKSFHFPSRSNPFVRRAIYSIADISGTPLTEGQIVNFERTYCQPLSDMNLSDSEGKNLYQYLNFNSNMGLIHTPCYEKYLPSEKRKKRSLCLKKCVEKGQMYRTFQRDSAYSTLSKWNLFQTYMPWFLTSTGYRYLKFLFLDTFSDLLPILSSSQKFVSIFHDIMHGSNISWRILQKKFCLPQRNLISEISSKCLHNLLLSEEMIHRNNESPLISTHLTNVREFLYAILFLLLVAAYLACTRLLFVFGASSELQTEFEKVKSLMIPSSMIELRKLLDRYPTSEPNSFWFLKQLGDSLGGNMLLGGGPAYRVKSIRSKKKYLNINLIDIIDLISIIPNPINRITFSRNTRHLSHTSKEIYSLIRKRKNVNGDWIDDKIESWVANSDSIDDEKREFLVQFSTLTTEKRIDQILLSLTHSDHFSKNDSGYQMIEQPGAIYLRYLVDIHKKYLMNYEFNTSSLAERRIFLAHYQTITYSQTSCGANSLHFPSHGKPFSLRLALSLSRGTLVIGSIGTGRSYLVKYLAKNSYLPFITVFLNKSLDNKSQGFDNIDVDASDDSDASDDIDASDDILDMELELLTSMNALTMDMMPEDEDLLYITLQFELAKAMSPCIIWIPNIHDLDVNESNYLSPGLLVNLLSRDYETRNILVIASTHIPQKVDPALIAPNKLNTCIKIRRLLIPQQRKHFFTLSYTRGFHLEKKMFHTNGFGSITMGSNARDLVALTNEALSISITQNKSIIDTNTIRSALHRQIWDLRSQVRSVQDHGILFYKIGRAVAQNVLLSNCPIDPISIYMKKKSCNEVDYYLYNWYFELGTSMKKLTILLYLLSCSAGSVTQDLWSLPGPDEKNGITPYGLVENDSGLVRGLLEVEGALVGSSRTCSQFDKDRVTLLLRPEPRNPLDMMQNGSCSILDQRFLYEKDESEFEEGDERQQIEEDLFNHIVWAPRIWRPWGFLFDCIERPNELGFPYWSRSFRGKRIVYDEEDELQENDSEFLQNGTVQYQTRDISSKEQGLFRISQFIWDPADPLFFLFKAQPFVSVFSHRELFADEEMSKGLLTPQKNRPTSLYKRWFIKKTQEKHFELLINRQRWLRTNRSLSNGSFRSNTLSESYQYLSNLFLSNGTLLDQMTKALLRKRWLFPDEMQIGFMEQDKDFPFLSQKDMWP.

1611-1618 serves as a coordination point for ATP; the sequence is GSIGTGRS.

It belongs to the Ycf2 family.

It localises to the plastid. It is found in the chloroplast stroma. Functionally, probable ATPase of unknown function. Its presence in a non-photosynthetic plant (Epifagus virginiana) and experiments in tobacco indicate that it has an essential function which is probably not related to photosynthesis. In Lactuca sativa (Garden lettuce), this protein is Protein Ycf2.